The sequence spans 269 residues: Putative phosphatase M6_Spy0533 (269 aa).

Asp-9 (nucleophile) is an active-site residue. Mg(2+) is bound at residue Asp-9. Ile-10 is a binding site for phosphate. Residue Asp-11 coordinates Mg(2+). Phosphate is bound by residues 43-44 (TG) and Lys-196. Asp-219 lines the Mg(2+) pocket. Asn-222 serves as a coordination point for phosphate.

Mg(2+) is required as a cofactor.

The protein is Putative phosphatase M6_Spy0533 of Streptococcus pyogenes serotype M6 (strain ATCC BAA-946 / MGAS10394).